The primary structure comprises 21 residues: Protopolybiakinin-1 (21 aa).

Positions 1 to 11 (DKNKKPIRVGG) are enriched in basic residues. The disordered stretch occupies residues 1–21 (DKNKKPIRVGGRRPPGFTPFR).

It belongs to the bradykinin-related peptide family. As to expression, expressed by the venom gland.

Its subcellular location is the secreted. Its function is as follows. Causes constriction of the isolated rat ileum muscles (is 13-fold less potent than bradykinin (BK)), as well as degranulation of mast cells (is 7-fold more potent than BK). In vivo, causes algesic effects. Muscle constriction and algesic effects are partially mediated by bradykinin receptors B2 (BDKRB2). In Protopolybia exigua (Neotropical social wasp), this protein is Protopolybiakinin-1.